The following is a 470-amino-acid chain: Crh-like protein UTR2 (470 aa).

Positions 1–23 (MRFSTLHFAFLATLSSIFTVVAA) are cleaved as a signal peptide. Cysteines 58 and 69 form a disulfide. N-linked (GlcNAc...) asparagine glycosylation is found at Asn65, Asn100, and Asn125. Residues 95–282 (SDYLGNSTEA…WAGGLINWDS (188 aa)) form the GH16 domain. Glu168 serves as the catalytic Nucleophile. Catalysis depends on Glu172, which acts as the Proton donor. Glu172 is a binding site for chitin. N-linked (GlcNAc...) asparagine glycosylation is found at Asn177, Asn194, Asn198, Asn202, Asn235, and Asn239. Residues Trp259 and Thr270 each contribute to the chitin site. Residues Asn314 and Asn327 are each glycosylated (N-linked (GlcNAc...) asparagine). The disordered stretch occupies residues 347-446 (SDDATGFDPQ…SSGSSSQGVA (100 aa)). Composition is skewed to low complexity over residues 370–384 (TTITSVSGSSTITSV) and 392–408 (TANVPAQNTAAAAQATA). Over residues 409-418 (KSSTGTNTYD) the composition is skewed to polar residues. Over residues 433 to 446 (TDSGSSGSSSQGVA) the composition is skewed to low complexity. Ser440 is lipidated: GPI-anchor amidated serine. Positions 441 to 470 (SSQGVANSLNESVISGIFASICLGILSFFM) are cleaved as a propeptide — removed in mature form. Residue Asn450 is glycosylated (N-linked (GlcNAc...) asparagine).

The protein belongs to the glycosyl hydrolase 16 family. CRH1 subfamily. The GPI-anchor is attached to the protein in the endoplasmic reticulum and serves to target the protein to the cell surface. There, the glucosamine-inositol phospholipid moiety is cleaved off and the GPI-modified mannoprotein is covalently attached via its lipidless GPI glycan remnant to the 1,6-beta-glucan of the outer cell wall layer.

The protein resides in the secreted. The protein localises to the cell wall. Its subcellular location is the membrane. It carries out the reaction Random endo-hydrolysis of N-acetyl-beta-D-glucosaminide (1-&gt;4)-beta-linkages in chitin and chitodextrins.. In terms of biological role, dual chitinase/transglycosylase that plays a role in cell wall architecture. Chitinase and transglycosylase activities are coupled. Required for the polysaccharide cross-linking at the septa and the cell wall. More specifically, transfers chitin to 1,6-beta-glucan in the cell wall. Plays an important role in fungal pathogenesis via its functions in cell wall assembly and regeneration, filamentation, and adherence to host cells. Acts as a cell surface antigen in acute candidemia patients. The chain is Crh-like protein UTR2 from Candida albicans (strain SC5314 / ATCC MYA-2876) (Yeast).